A 689-amino-acid chain; its full sequence is 1,4-alpha-glucan-branching enzyme (689 aa).

2 residues coordinate (1,4-alpha-D-glucosyl)n: tryptophan 93 and lysine 128. Residue aspartate 345 is the Nucleophile of the active site. Residue glutamate 400 is the Proton donor of the active site.

Belongs to the glycosyl hydrolase 13 family. GlgB subfamily.

It localises to the cytoplasm. The enzyme catalyses Transfers a segment of a (1-&gt;4)-alpha-D-glucan chain to a primary hydroxy group in a similar glucan chain.. It participates in glycan biosynthesis; glycogen biosynthesis. Glycogen-branching enzyme participates in the glycogen biosynthetic process along with glycogenin and glycogen synthase. Generates alpha-1,6-glucosidic branches from alpha-1,4-linked glucose chains, to increase solubility of the glycogen polymer. This Aspergillus oryzae (strain ATCC 42149 / RIB 40) (Yellow koji mold) protein is 1,4-alpha-glucan-branching enzyme (gbeA).